The chain runs to 199 residues: Probable cobalt-precorrin-6B C(15)-methyltransferase (decarboxylating) (199 aa).

Residues threonine 24, 48-52, aspartate 72, and alanine 101 contribute to the S-adenosyl-L-methionine site; that span reads GCGTG.

It belongs to the methyltransferase superfamily. Archaeal-type CbiT family.

It catalyses the reaction Co-precorrin-6B + S-adenosyl-L-methionine = Co-precorrin-7 + S-adenosyl-L-homocysteine + CO2. It functions in the pathway cofactor biosynthesis; adenosylcobalamin biosynthesis; cob(II)yrinate a,c-diamide from sirohydrochlorin (anaerobic route): step 8/10. In terms of biological role, catalyzes the methylation of C-15 in cobalt-precorrin-6B followed by the decarboxylation of C-12 to form cobalt-precorrin-7. In Saccharolobus islandicus (strain L.S.2.15 / Lassen #1) (Sulfolobus islandicus), this protein is Probable cobalt-precorrin-6B C(15)-methyltransferase (decarboxylating).